The sequence spans 208 residues: MDIEWQISSGLVEYEVAVNAMVSRVDKIVQGSEREMVWLLEHPPVYTAGTSANSSDLLIDNLFPVIKTTRGGKYSYHGPGQRVVYVMLDLKRRNRCDIRAYVRDLGVWIVNTLAEFAIDSYFSSENIGVWVQNDMHSEKIAAFGIRLRRWVTYHGVAINISTDLTHYSGIVPCGILGSGVTSLRALGKEVTFEQFDSALKKEFYKVFA.

The 178-residue stretch at 31–208 folds into the BPL/LPL catalytic domain; sequence GSEREMVWLL…LKKEFYKVFA (178 aa). Residues 70-77, 142-144, and 155-157 each bind substrate; these read RGGKYSYH, AFG, and GVA. The Acyl-thioester intermediate role is filled by C173.

The protein belongs to the LipB family.

Its subcellular location is the cytoplasm. It carries out the reaction octanoyl-[ACP] + L-lysyl-[protein] = N(6)-octanoyl-L-lysyl-[protein] + holo-[ACP] + H(+). The protein operates within protein modification; protein lipoylation via endogenous pathway; protein N(6)-(lipoyl)lysine from octanoyl-[acyl-carrier-protein]: step 1/2. Its function is as follows. Catalyzes the transfer of endogenously produced octanoic acid from octanoyl-acyl-carrier-protein onto the lipoyl domains of lipoate-dependent enzymes. Lipoyl-ACP can also act as a substrate although octanoyl-ACP is likely to be the physiological substrate. The polypeptide is Octanoyltransferase (Anaplasma phagocytophilum (strain HZ)).